The following is a 141-amino-acid chain: ATP synthase epsilon chain (141 aa).

The protein belongs to the ATPase epsilon chain family. In terms of assembly, F-type ATPases have 2 components, CF(1) - the catalytic core - and CF(0) - the membrane proton channel. CF(1) has five subunits: alpha(3), beta(3), gamma(1), delta(1), epsilon(1). CF(0) has three main subunits: a, b and c.

The protein localises to the cell inner membrane. Functionally, produces ATP from ADP in the presence of a proton gradient across the membrane. The sequence is that of ATP synthase epsilon chain from Dechloromonas aromatica (strain RCB).